Consider the following 343-residue polypeptide: Anthranilate phosphoribosyltransferase (343 aa).

Residues Gly84, 87–88 (GD), Thr92, 94–97 (NIST), 112–120 (KHGNRSASS), and Ser124 contribute to the 5-phospho-alpha-D-ribose 1-diphosphate site. Residue Gly84 participates in anthranilate binding. Ser96 is a Mg(2+) binding site. Asn115 is a binding site for anthranilate. Arg170 is a binding site for anthranilate. Asp229 and Glu230 together coordinate Mg(2+).

It belongs to the anthranilate phosphoribosyltransferase family. Homodimer. Requires Mg(2+) as cofactor.

The enzyme catalyses N-(5-phospho-beta-D-ribosyl)anthranilate + diphosphate = 5-phospho-alpha-D-ribose 1-diphosphate + anthranilate. It participates in amino-acid biosynthesis; L-tryptophan biosynthesis; L-tryptophan from chorismate: step 2/5. In terms of biological role, catalyzes the transfer of the phosphoribosyl group of 5-phosphorylribose-1-pyrophosphate (PRPP) to anthranilate to yield N-(5'-phosphoribosyl)-anthranilate (PRA). The protein is Anthranilate phosphoribosyltransferase of Bordetella bronchiseptica (strain ATCC BAA-588 / NCTC 13252 / RB50) (Alcaligenes bronchisepticus).